A 219-amino-acid polypeptide reads, in one-letter code: MALPLSGTRHLTRALLSNVTLMAPPRIPSSVHYGGSRLGCSTRFFSIRCGANRSGSTYSPLNSGSNFSDRPPTEMAPLFPGCDYEHWLIVMDKPGGEGATKQQMIDCYIQTLAKVVGSEEEAKKRIYNVSCERYLGFGCEIDEETSTKLEGLPGVLFVLPDSYVDPENKDYGAELFVNGEIVQRSPERQRRVEPQPQRAQDRPRYNDRTRYSRRRENTR.

The N-terminal 48 residues, 1–48, are a transit peptide targeting the chloroplast; that stretch reads MALPLSGTRHLTRALLSNVTLMAPPRIPSSVHYGGSRLGCSTRFFSIR. Residues 182–219 form a disordered region; it reads VQRSPERQRRVEPQPQRAQDRPRYNDRTRYSRRRENTR. Basic and acidic residues predominate over residues 185 to 219; it reads SPERQRRVEPQPQRAQDRPRYNDRTRYSRRRENTR.

It belongs to the MORF family. In terms of assembly, homodimer and heterodimer with MORF9. Interacts with protoporphyrinogen oxidase 1 PPOX1. Heterodimers with MORF8/RIP1 and MORF9/RIP9. Interacts with PCMP-A2/PMD1. Interacts with ORRM1. Interacts with ORRM6.

It is found in the plastid. The protein localises to the chloroplast. In terms of biological role, involved in plastid rRNA processing and consequently in translation and early chloroplast differentiation. Involved in organellar RNA editing. Required for the processing of multiple editing sites in plastids. This chain is Multiple organellar RNA editing factor 2, chloroplastic, found in Arabidopsis thaliana (Mouse-ear cress).